Here is a 297-residue protein sequence, read N- to C-terminus: Protease HtpX homolog (297 aa).

2 consecutive transmembrane segments (helical) span residues 14-34 (IFLI…AGYL) and 39-59 (YQFG…SMIF). Histidine 143 is a binding site for Zn(2+). The active site involves glutamate 144. Residue histidine 147 participates in Zn(2+) binding. 2 helical membrane-spanning segments follow: residues 153-173 (IRIS…ASMG) and 196-216 (IVFL…ASMV). A Zn(2+)-binding site is contributed by glutamate 225.

It belongs to the peptidase M48B family. It depends on Zn(2+) as a cofactor.

It localises to the cell membrane. The polypeptide is Protease HtpX homolog (Streptococcus uberis (strain ATCC BAA-854 / 0140J)).